We begin with the raw amino-acid sequence, 232 residues long: tRNA (guanine-N(7)-)-methyltransferase (232 aa).

The S-adenosyl-L-methionine site is built by Glu-63, Glu-88, Asp-115, and Asp-137. Asp-137 is an active-site residue. Substrate-binding positions include Lys-141, Asp-173, and 211 to 214; that span reads TRYE.

This sequence belongs to the class I-like SAM-binding methyltransferase superfamily. TrmB family.

The enzyme catalyses guanosine(46) in tRNA + S-adenosyl-L-methionine = N(7)-methylguanosine(46) in tRNA + S-adenosyl-L-homocysteine. It functions in the pathway tRNA modification; N(7)-methylguanine-tRNA biosynthesis. Its function is as follows. Catalyzes the formation of N(7)-methylguanine at position 46 (m7G46) in tRNA. The sequence is that of tRNA (guanine-N(7)-)-methyltransferase from Rhizobium meliloti (strain 1021) (Ensifer meliloti).